The chain runs to 104 residues: uncharacterized protein (104 aa).

This is an uncharacterized protein from Schizosaccharomyces pombe (strain 972 / ATCC 24843) (Fission yeast).